The primary structure comprises 470 residues: Glutamate--tRNA ligase 1 (470 aa).

The 'HIGH' region signature appears at 8 to 18 (PSPTGYLHVGG). The 'KMSKS' region signature appears at 250–254 (KLSKR). Lys-253 contacts ATP.

The protein belongs to the class-I aminoacyl-tRNA synthetase family. Glutamate--tRNA ligase type 1 subfamily. In terms of assembly, monomer.

Its subcellular location is the cytoplasm. It carries out the reaction tRNA(Glu) + L-glutamate + ATP = L-glutamyl-tRNA(Glu) + AMP + diphosphate. Its function is as follows. Catalyzes the attachment of glutamate to tRNA(Glu) in a two-step reaction: glutamate is first activated by ATP to form Glu-AMP and then transferred to the acceptor end of tRNA(Glu). This is Glutamate--tRNA ligase 1 from Pseudothermotoga lettingae (strain ATCC BAA-301 / DSM 14385 / NBRC 107922 / TMO) (Thermotoga lettingae).